The following is a 375-amino-acid chain: Tyrosine--tRNA ligase (375 aa).

Residues tyrosine 37, tyrosine 168, glutamine 172, aspartate 175, and glutamine 190 each contribute to the L-tyrosine site. Positions 251 to 255 match the 'KMSKS' region motif; the sequence is KMSKS. Lysine 254 serves as a coordination point for ATP.

This sequence belongs to the class-I aminoacyl-tRNA synthetase family. TyrS type 4 subfamily. In terms of assembly, homodimer.

It is found in the cytoplasm. The enzyme catalyses tRNA(Tyr) + L-tyrosine + ATP = L-tyrosyl-tRNA(Tyr) + AMP + diphosphate + H(+). Catalyzes the attachment of tyrosine to tRNA(Tyr) in a two-step reaction: tyrosine is first activated by ATP to form Tyr-AMP and then transferred to the acceptor end of tRNA(Tyr). This chain is Tyrosine--tRNA ligase, found in Thermococcus gammatolerans (strain DSM 15229 / JCM 11827 / EJ3).